The primary structure comprises 206 residues: HTH-type transcriptional regulator Hpr (206 aa).

Residues 13–157 (ALLFSQRMAQ…MMSIIRHIYG (145 aa)) form the HTH marR-type domain. The H-T-H motif DNA-binding region spans 63–86 (ISEIAKFGVMHVSTAFNFSKKLEE). Positions 177–206 (SEEGKMKKKQEAKEAGESIEVDKPLEPLKN) are disordered. Basic and acidic residues predominate over residues 178 to 206 (EEGKMKKKQEAKEAGESIEVDKPLEPLKN).

As to quaternary structure, homodimer.

Its function is as follows. Negative regulator of protease production and sporulation. This Bacillus licheniformis (strain ATCC 14580 / DSM 13 / JCM 2505 / CCUG 7422 / NBRC 12200 / NCIMB 9375 / NCTC 10341 / NRRL NRS-1264 / Gibson 46) protein is HTH-type transcriptional regulator Hpr.